The sequence spans 274 residues: NAD(P)H dehydrogenase [quinone] 1 (274 aa).

At Ala-2 the chain carries N-acetylalanine. FAD contacts are provided by residues His-12, 18–19, and Gln-67; that span reads FN. At Ser-82 the chain carries Phosphoserine. Residue 104–107 participates in FAD binding; that stretch reads LYWF. 126–128 contacts substrate; it reads AYT. Residues 148 to 151, Tyr-156, and Arg-201 each bind FAD; that span reads TTGG. The segment at 225-274 is important for apoenzyme conformational stability; sequence PSSLFDLNFQAGFLLKKEVQEEQKKNKFGLSVGHHLGKSIPADNQIKARK. Lys-251 participates in a covalent cross-link: Glycyl lysine isopeptide (Lys-Gly) (interchain with G-Cter in SUMO2).

Belongs to the NAD(P)H dehydrogenase (quinone) family. Homodimer. Interacts with PDLIM4 isoform 2; this interaction stabilizes PDLIM4 isoform 2 in response to oxidative stress and protects it from ubiquitin-independent degradation by the core 20S proteasome. Interacts with TP73 (via SAM domain); this interaction is NADH-dependent, stabilizes TP73 in response to oxidative stress and protects it from ubiquitin-independent degradation by the 20S proteasome. Interacts with TP53; this interaction is NADH-dependent, stabilizes TP53 in response to oxidative stress and protects it from ubiquitin-independent degradation by the 20S proteasome. Requires FAD as cofactor.

Its subcellular location is the cytoplasm. It is found in the cytosol. The catalysed reaction is a quinone + NADH + H(+) = a quinol + NAD(+). The enzyme catalyses a quinone + NADPH + H(+) = a quinol + NADP(+). It carries out the reaction ubiquinone-10 + NADH + H(+) = ubiquinol-10 + NAD(+). It catalyses the reaction menadione + NADH + H(+) = menadiol + NAD(+). Flavin-containing quinone reductase that catalyzes two-electron reduction of quinones to hydroquinones using either NADH or NADPH as electron donors. In a ping-pong kinetic mechanism, the electrons are sequentially transferred from NAD(P)H to flavin cofactor and then from reduced flavin to the quinone, bypassing the formation of semiquinone and reactive oxygen species. Regulates cellular redox state primarily through quinone detoxification. Reduces components of plasma membrane redox system such as coenzyme Q and vitamin quinones, producing antioxidant hydroquinone forms. In the process may function as superoxide scavenger to prevent hydroquinone oxidation and facilitate excretion. Alternatively, can activate quinones and their derivatives by generating redox reactive hydroquinones with DNA cross-linking antitumor potential. Acts as a gatekeeper of the core 20S proteasome known to degrade proteins with unstructured regions. Upon oxidative stress, interacts with tumor suppressors TP53 and TP73 in a NADH-dependent way and inhibits their ubiquitin-independent degradation by the 20S proteasome. The protein is NAD(P)H dehydrogenase [quinone] 1 (Nqo1) of Rattus norvegicus (Rat).